Here is a 376-residue protein sequence, read N- to C-terminus: Chaperone protein DnaJ (376 aa).

The J domain occupies 5–70; sequence DYYEVLGVAR…QKRAAYDQFG (66 aa). The segment at 134 to 212 adopts a CR-type zinc-finger fold; it reads GTSVKIKVPT…CHGHGRVEET (79 aa). Cys-147, Cys-150, Cys-164, Cys-167, Cys-186, Cys-189, Cys-200, and Cys-203 together coordinate Zn(2+). CXXCXGXG motif repeat units lie at residues 147–154, 164–171, 186–193, and 200–207; these read CTNCGGSG, CNTCGGHG, CPTCRGQG, and CNKCHGHG.

This sequence belongs to the DnaJ family. Homodimer. Requires Zn(2+) as cofactor.

Its subcellular location is the cytoplasm. Functionally, participates actively in the response to hyperosmotic and heat shock by preventing the aggregation of stress-denatured proteins and by disaggregating proteins, also in an autonomous, DnaK-independent fashion. Unfolded proteins bind initially to DnaJ; upon interaction with the DnaJ-bound protein, DnaK hydrolyzes its bound ATP, resulting in the formation of a stable complex. GrpE releases ADP from DnaK; ATP binding to DnaK triggers the release of the substrate protein, thus completing the reaction cycle. Several rounds of ATP-dependent interactions between DnaJ, DnaK and GrpE are required for fully efficient folding. Also involved, together with DnaK and GrpE, in the DNA replication of plasmids through activation of initiation proteins. The sequence is that of Chaperone protein DnaJ from Teredinibacter turnerae (strain ATCC 39867 / T7901).